Reading from the N-terminus, the 210-residue chain is MKGKFIVIEGIDGCGKTTQIDEISRWLPTSGLMGKNSKLIKTREPGGSLLGKKLRNLILDNNKNNKPSSLAELLLYSADRAEHVSKIISPALKKEDWVISDRFSDSTLAYQGYGRHINLEIIKNIESIVCQGEYPDLTIFLEISAEESILRRKNFVPDRMESEGINFLQKVNEGFKLIAKEKKWKVISATQNITAISNEIKETLLKTFRN.

Position 10 to 17 (10 to 17 (GIDGCGKT)) interacts with ATP.

Belongs to the thymidylate kinase family.

It catalyses the reaction dTMP + ATP = dTDP + ADP. Its function is as follows. Phosphorylation of dTMP to form dTDP in both de novo and salvage pathways of dTTP synthesis. In Prochlorococcus marinus (strain MIT 9515), this protein is Thymidylate kinase.